A 394-amino-acid polypeptide reads, in one-letter code: Flap endonuclease 1-A (394 aa).

The segment at 1–105 (MGIKGLTKLI…RELAKRFARR (105 aa)) is N-domain. A Mg(2+)-binding site is contributed by Asp34. Arg71 contributes to the DNA binding site. Positions 87, 159, 161, 180, and 182 each coordinate Mg(2+). The interval 123–254 (DVEKYSKKTV…QTALKMIRQH (132 aa)) is I-domain. A DNA-binding site is contributed by Glu159. Positions 232 and 234 each coordinate DNA. Asp234 provides a ligand contact to Mg(2+). The tract at residues 338-346 (SQGRLESFF) is interaction with PCNA. The disordered stretch occupies residues 343–394 (ESFFGVSSSSSNKRKEAPDSEASAGKQVKTAAAVKPAKAASKKGPAKGGKKK). Low complexity predominate over residues 368 to 381 (KQVKTAAAVKPAKA). The segment covering 382–394 (ASKKGPAKGGKKK) has biased composition (basic residues).

Belongs to the XPG/RAD2 endonuclease family. FEN1 subfamily. In terms of assembly, interacts with PCNA. Three molecules of FEN1 bind to one PCNA trimer with each molecule binding to one PCNA monomer. PCNA stimulates the nuclease activity without altering cleavage specificity. Mg(2+) serves as cofactor. Post-translationally, phosphorylated. Phosphorylation upon DNA damage induces relocalization to the nuclear plasma.

Its subcellular location is the nucleus. The protein localises to the nucleolus. It localises to the nucleoplasm. It is found in the mitochondrion. In terms of biological role, structure-specific nuclease with 5'-flap endonuclease and 5'-3' exonuclease activities involved in DNA replication and repair. During DNA replication, cleaves the 5'-overhanging flap structure that is generated by displacement synthesis when DNA polymerase encounters the 5'-end of a downstream Okazaki fragment. It enters the flap from the 5'-end and then tracks to cleave the flap base, leaving a nick for ligation. Also involved in the long patch base excision repair (LP-BER) pathway, by cleaving within the apurinic/apyrimidinic (AP) site-terminated flap. Acts as a genome stabilization factor that prevents flaps from equilibrating into structures that lead to duplications and deletions. Also possesses 5'-3' exonuclease activity on nicked or gapped double-stranded DNA, and exhibits RNase H activity. Also involved in replication and repair of rDNA and in repairing mitochondrial DNA. This chain is Flap endonuclease 1-A, found in Physcomitrium patens (Spreading-leaved earth moss).